The primary structure comprises 175 residues: Adenylate kinase isoenzyme 6 homolog (175 aa).

ATP contacts are provided by Gly17, Gly19, Lys20, Thr21, and Ser22. The NMPbind stretch occupies residues Asp37–Leu60. The interval Lys112–Asn122 is LID. Arg113 contacts ATP.

The protein belongs to the adenylate kinase family. AK6 subfamily. Monomer and homodimer. Interacts with small ribosomal subunit protein uS11. Not a structural component of 43S pre-ribosomes, but transiently interacts with them by binding to uS11.

Its subcellular location is the cytoplasm. The protein resides in the nucleus. The catalysed reaction is AMP + ATP = 2 ADP. It carries out the reaction ATP + H2O = ADP + phosphate + H(+). In terms of biological role, broad-specificity nucleoside monophosphate (NMP) kinase that catalyzes the reversible transfer of the terminal phosphate group between nucleoside triphosphates and monophosphates. Also has ATPase activity. Involved in the late cytoplasmic maturation steps of the 40S ribosomal particles, specifically 18S rRNA maturation. While NMP activity is not required for ribosome maturation, ATPase activity is. Associates transiently with small ribosomal subunit protein uS11. ATP hydrolysis breaks the interaction with uS11. May temporarily remove uS11 from the ribosome to enable a conformational change of the ribosomal RNA that is needed for the final maturation step of the small ribosomal subunit. Its NMP activity may have a role in nuclear energy homeostasis. In Dictyostelium discoideum (Social amoeba), this protein is Adenylate kinase isoenzyme 6 homolog.